The sequence spans 366 residues: Ribosomal RNA large subunit methyltransferase M (366 aa).

S-adenosyl-L-methionine is bound by residues S188, 221-224 (CPGG), D240, D260, and D277. K306 acts as the Proton acceptor in catalysis.

Belongs to the class I-like SAM-binding methyltransferase superfamily. RNA methyltransferase RlmE family. RlmM subfamily. In terms of assembly, monomer.

It is found in the cytoplasm. The enzyme catalyses cytidine(2498) in 23S rRNA + S-adenosyl-L-methionine = 2'-O-methylcytidine(2498) in 23S rRNA + S-adenosyl-L-homocysteine + H(+). Functionally, catalyzes the 2'-O-methylation at nucleotide C2498 in 23S rRNA. This chain is Ribosomal RNA large subunit methyltransferase M, found in Salmonella heidelberg (strain SL476).